Consider the following 165-residue polypeptide: Phosphopantetheine adenylyltransferase (165 aa).

T9 contacts substrate. ATP contacts are provided by residues 9 to 10 (TF) and H17. Residues K41, L73, and R87 each coordinate substrate. ATP is bound by residues 88–90 (GLR), E98, and 123–129 (YQFISGT).

It belongs to the bacterial CoaD family. In terms of assembly, homohexamer. Mg(2+) is required as a cofactor.

The protein localises to the cytoplasm. The enzyme catalyses (R)-4'-phosphopantetheine + ATP + H(+) = 3'-dephospho-CoA + diphosphate. It participates in cofactor biosynthesis; coenzyme A biosynthesis; CoA from (R)-pantothenate: step 4/5. Functionally, reversibly transfers an adenylyl group from ATP to 4'-phosphopantetheine, yielding dephospho-CoA (dPCoA) and pyrophosphate. In Burkholderia lata (strain ATCC 17760 / DSM 23089 / LMG 22485 / NCIMB 9086 / R18194 / 383), this protein is Phosphopantetheine adenylyltransferase.